The following is a 563-amino-acid chain: Coiled-coil domain-containing protein 38 (563 aa).

Positions 128–211 form a coiled coil; the sequence is TKKKTIKRFE…SIKSDIAKTE (84 aa). Positions 265–310 are disordered; that stretch reads DNSIDSDKMSVSEEWSSRRGSQGGRHGKHTLGQDSRKSSGFTRPES. Basic and acidic residues predominate over residues 269-281; that stretch reads DSDKMSVSEEWSS. Coiled coils occupy residues 361 to 415 and 454 to 522; these read QDVD…RSRL and NAVQ…AVAQ. Residues 543–563 form a disordered region; that stretch reads QELLLVSDTRSKSQDEEYFFS.

Interacts with CCDC42, CFAP53, IFT88 and ODF2. Interacts with CCDC146. Interacts with TEKT3. Interacts with ubiquitinated histone H2A. As to expression, expressed exclusively in testis where it is detected mainly in spermatogonia and spermatocytes (at protein level).

Its subcellular location is the cytoplasm. The protein resides in the cytoskeleton. The protein localises to the microtubule organizing center. It localises to the centrosome. It is found in the perinuclear region. Its subcellular location is the cell projection. The protein resides in the cilium. The protein localises to the flagellum. Its function is as follows. Essential for male fertility. Required for sperm flagellum biogenesis. Also required for acrosome biogenesis. Required for the attachment of developing acrosomes to the nucleus during spermiogenesis and may be involved in the transport of fibrous sheath components. This is Coiled-coil domain-containing protein 38 (Ccdc38) from Mus musculus (Mouse).